We begin with the raw amino-acid sequence, 62 residues long: Small EDRK-rich factor 1 (62 aa).

Composition is skewed to basic and acidic residues over residues Met-1 to Ser-30 and Ile-50 to Lys-62. Positions Met-1 to Lys-62 are disordered.

This sequence belongs to the SERF family. As to quaternary structure, interacts with SNCA; this interaction promotes the aggregation of SNCA. Expressed in brain (at protein level). Highly expressed in the testis.

It is found in the cytoplasm. The protein resides in the cytosol. The protein localises to the nucleus. In terms of biological role, positive regulator of amyloid protein aggregation and proteotoxicity. Induces conformational changes in amyloid proteins, such as APP, HTT, and SNCA, driving them into compact formations preceding the formation of aggregates. The polypeptide is Small EDRK-rich factor 1 (Serf1) (Mus musculus (Mouse)).